A 130-amino-acid polypeptide reads, in one-letter code: Small ribosomal subunit protein uS8 (130 aa).

Belongs to the universal ribosomal protein uS8 family. As to quaternary structure, part of the 30S ribosomal subunit. Contacts proteins S5 and S12.

Functionally, one of the primary rRNA binding proteins, it binds directly to 16S rRNA central domain where it helps coordinate assembly of the platform of the 30S subunit. The chain is Small ribosomal subunit protein uS8 from Pseudomonas aeruginosa (strain UCBPP-PA14).